Here is a 261-residue protein sequence, read N- to C-terminus: Single-strand annealing weakened protein 1 (261 aa).

In terms of assembly, interacts with MSH2, MSH3, RAD1, RAD10, RAD51 and RAD52.

The protein resides in the nucleus. In terms of biological role, catalyzes 3'-non-homologous tail removal of RAD1/RAD10-dependent single-strand annealing recombination intermediates. Plays a key role in targeting RAD1/RAD10 complex to 3'-flap cleavage substrate in recombination. Also contributes to the integrity of ribosomal DNA arrays. This Saccharomyces cerevisiae (strain ATCC 204508 / S288c) (Baker's yeast) protein is Single-strand annealing weakened protein 1 (SAW1).